The chain runs to 92 residues: Putative transmembrane protein ORF92 (92 aa).

Transmembrane regions (helical) follow at residues phenylalanine 11–isoleucine 28, phenylalanine 32–serine 52, and phenylalanine 54–glycine 74.

It is found in the host membrane. The polypeptide is Putative transmembrane protein ORF92 (Acidianus convivator (ABV)).